Here is a 238-residue protein sequence, read N- to C-terminus: 1-(5-phosphoribosyl)-5-[(5-phosphoribosylamino)methylideneamino] imidazole-4-carboxamide isomerase (238 aa).

Residue D8 is the Proton acceptor of the active site. D127 serves as the catalytic Proton donor.

Belongs to the HisA/HisF family.

It localises to the cytoplasm. It catalyses the reaction 1-(5-phospho-beta-D-ribosyl)-5-[(5-phospho-beta-D-ribosylamino)methylideneamino]imidazole-4-carboxamide = 5-[(5-phospho-1-deoxy-D-ribulos-1-ylimino)methylamino]-1-(5-phospho-beta-D-ribosyl)imidazole-4-carboxamide. The protein operates within amino-acid biosynthesis; L-histidine biosynthesis; L-histidine from 5-phospho-alpha-D-ribose 1-diphosphate: step 4/9. The sequence is that of 1-(5-phosphoribosyl)-5-[(5-phosphoribosylamino)methylideneamino] imidazole-4-carboxamide isomerase from Nitratiruptor sp. (strain SB155-2).